We begin with the raw amino-acid sequence, 442 residues long: Trigger factor (442 aa).

Residues 163–248 (YDRVTINYCI…IIKIEKKQEL (86 aa)) enclose the PPIase FKBP-type domain.

This sequence belongs to the FKBP-type PPIase family. Tig subfamily.

The protein localises to the cytoplasm. It catalyses the reaction [protein]-peptidylproline (omega=180) = [protein]-peptidylproline (omega=0). Involved in protein export. Acts as a chaperone by maintaining the newly synthesized protein in an open conformation. Functions as a peptidyl-prolyl cis-trans isomerase. The polypeptide is Trigger factor (Buchnera aphidicola subsp. Acyrthosiphon pisum (strain 5A)).